Reading from the N-terminus, the 380-residue chain is Chaperone protein DnaJ (380 aa).

The tract at residues 1–48 (MAKKDYYDTLGVPKNASDDDIKKAYRKLAMKHHPDRNQGDKSKVSEEK) is disordered. The 68-residue stretch at 5–72 (DYYDTLGVPK…NKRMAYDQYG (68 aa)) folds into the J domain. The span at 24 to 34 (AYRKLAMKHHP) shows a compositional bias: basic residues. The span at 35–48 (DRNQGDKSKVSEEK) shows a compositional bias: basic and acidic residues. A CR-type zinc finger spans residues 139-217 (GKEAQIRIPS…CHGVGKTKNN (79 aa)). The Zn(2+) site is built by Cys152, Cys155, Cys169, Cys172, Cys191, Cys194, Cys205, and Cys208. CXXCXGXG motif repeat units lie at residues 152–159 (CNTCHGSG), 169–176 (CTTCHGHG), 191–198 (CPQCKGTG), and 205–212 (CVACHGVG). The segment at 357–380 (KKGGARHSPSEEGWADKLKSFFSA) is disordered. Residues 364–380 (SPSEEGWADKLKSFFSA) are compositionally biased toward basic and acidic residues.

It belongs to the DnaJ family. In terms of assembly, homodimer. The cofactor is Zn(2+).

It is found in the cytoplasm. Participates actively in the response to hyperosmotic and heat shock by preventing the aggregation of stress-denatured proteins and by disaggregating proteins, also in an autonomous, DnaK-independent fashion. Unfolded proteins bind initially to DnaJ; upon interaction with the DnaJ-bound protein, DnaK hydrolyzes its bound ATP, resulting in the formation of a stable complex. GrpE releases ADP from DnaK; ATP binding to DnaK triggers the release of the substrate protein, thus completing the reaction cycle. Several rounds of ATP-dependent interactions between DnaJ, DnaK and GrpE are required for fully efficient folding. Also involved, together with DnaK and GrpE, in the DNA replication of plasmids through activation of initiation proteins. The sequence is that of Chaperone protein DnaJ from Polaromonas sp. (strain JS666 / ATCC BAA-500).